A 493-amino-acid polypeptide reads, in one-letter code: MSNYFNTLNLRQKLDQLGRCRFMERSEFADGCNFLKGKKIVIVGCGAQGLNQGLNMRDSGLDISYALRPEAITEKRASFQRATENGFKVGTYQELIPTADLVVNLTPDKQHSKVVADVMPLMKQGASFGYSHGFNIVEVGEQIREDITVVMVAPKCPGTEVREEYKRGFGVPTLIAVHPANDPKGEGMAIAKAWASATGGDRAGVLESSFVAEVKSDLMGEQTILCGMLQAGSIVCYDKLVADGKDPAYAGKLIQYGWETITEALKQGGITLMMDRLSNSAKIRAFELAEEIKEHLNFLYLKHMDDIISGEFSATMMADWANGDKDLFAWREATGKTAFENAPKADGIKISEQEYFDNGVVMVAMVKAGVEMAFDAMVASGIYEESAYYESLHELPLIANTIARKRLYEMNVVISDTAEYGNYLFSNVATPILAKEIVSQLKRGDLGEPTPAAEIDNVYLRDINDTIRNHPVELIGQELRGYMTDMKRISSQG.

The region spanning 14–208 is the KARI N-terminal Rossmann domain; the sequence is LDQLGRCRFM…GGDRAGVLES (195 aa). Residues 45 to 48, Arg68, Arg76, Ser78, and 108 to 110 contribute to the NADP(+) site; these read CGAQ and DKQ. His132 is a catalytic residue. Gly158 serves as a coordination point for NADP(+). KARI C-terminal knotted domains lie at 209-345 and 346-486; these read SFVA…APKA and DGIK…MTDM. Asp217, Glu221, Glu390, and Glu394 together coordinate Mg(2+). Ser415 serves as a coordination point for substrate.

It belongs to the ketol-acid reductoisomerase family. Mg(2+) serves as cofactor.

The catalysed reaction is (2R)-2,3-dihydroxy-3-methylbutanoate + NADP(+) = (2S)-2-acetolactate + NADPH + H(+). It catalyses the reaction (2R,3R)-2,3-dihydroxy-3-methylpentanoate + NADP(+) = (S)-2-ethyl-2-hydroxy-3-oxobutanoate + NADPH + H(+). It functions in the pathway amino-acid biosynthesis; L-isoleucine biosynthesis; L-isoleucine from 2-oxobutanoate: step 2/4. It participates in amino-acid biosynthesis; L-valine biosynthesis; L-valine from pyruvate: step 2/4. In terms of biological role, involved in the biosynthesis of branched-chain amino acids (BCAA). Catalyzes an alkyl-migration followed by a ketol-acid reduction of (S)-2-acetolactate (S2AL) to yield (R)-2,3-dihydroxy-isovalerate. In the isomerase reaction, S2AL is rearranged via a Mg-dependent methyl migration to produce 3-hydroxy-3-methyl-2-ketobutyrate (HMKB). In the reductase reaction, this 2-ketoacid undergoes a metal-dependent reduction by NADPH to yield (R)-2,3-dihydroxy-isovalerate. The protein is Ketol-acid reductoisomerase (NADP(+)) of Mannheimia succiniciproducens (strain KCTC 0769BP / MBEL55E).